A 338-amino-acid chain; its full sequence is Glycerol-3-phosphate dehydrogenase [NAD(P)+] (338 aa).

NADPH-binding residues include tryptophan 12, histidine 33, and lysine 110. 3 residues coordinate sn-glycerol 3-phosphate: lysine 110, glycine 142, and serine 144. Alanine 146 provides a ligand contact to NADPH. Sn-glycerol 3-phosphate-binding residues include lysine 197, aspartate 250, serine 260, arginine 261, and asparagine 262. Catalysis depends on lysine 197, which acts as the Proton acceptor. Arginine 261 lines the NADPH pocket. NADPH-binding residues include valine 286 and glutamate 288.

The protein belongs to the NAD-dependent glycerol-3-phosphate dehydrogenase family.

It localises to the cytoplasm. The catalysed reaction is sn-glycerol 3-phosphate + NAD(+) = dihydroxyacetone phosphate + NADH + H(+). It carries out the reaction sn-glycerol 3-phosphate + NADP(+) = dihydroxyacetone phosphate + NADPH + H(+). Its pathway is membrane lipid metabolism; glycerophospholipid metabolism. Functionally, catalyzes the reduction of the glycolytic intermediate dihydroxyacetone phosphate (DHAP) to sn-glycerol 3-phosphate (G3P), the key precursor for phospholipid synthesis. This is Glycerol-3-phosphate dehydrogenase [NAD(P)+] from Acidobacterium capsulatum (strain ATCC 51196 / DSM 11244 / BCRC 80197 / JCM 7670 / NBRC 15755 / NCIMB 13165 / 161).